The primary structure comprises 217 residues: MTDSVQTPDVPLLDAVQARLLGCLVEKEATTPDTYPLTVNAAQSAANQKTAREPVMNIDAGSVQHALRQLEALGLARQHFSSRADRYEHRLQAALDLTRQQTVLLALLLLRGPQTLGELITRSERLHRFADTDEARHAIERLQQRALLVVLPRASGQREDRYMHLLCGEVDGAALAARYASSGGGSSDAADPGLAERVAQLEAAVAELQAQLAELRG.

It belongs to the UPF0502 family.

The chain is UPF0502 protein Smlt0097 from Stenotrophomonas maltophilia (strain K279a).